A 270-amino-acid polypeptide reads, in one-letter code: Putative pyruvate, phosphate dikinase regulatory protein 2 (270 aa).

Position 151–158 (151–158 (GVSRTSKT)) interacts with ADP.

It belongs to the pyruvate, phosphate/water dikinase regulatory protein family. PDRP subfamily.

It catalyses the reaction N(tele)-phospho-L-histidyl/L-threonyl-[pyruvate, phosphate dikinase] + ADP = N(tele)-phospho-L-histidyl/O-phospho-L-threonyl-[pyruvate, phosphate dikinase] + AMP + H(+). The catalysed reaction is N(tele)-phospho-L-histidyl/O-phospho-L-threonyl-[pyruvate, phosphate dikinase] + phosphate + H(+) = N(tele)-phospho-L-histidyl/L-threonyl-[pyruvate, phosphate dikinase] + diphosphate. Functionally, bifunctional serine/threonine kinase and phosphorylase involved in the regulation of the pyruvate, phosphate dikinase (PPDK) by catalyzing its phosphorylation/dephosphorylation. The protein is Putative pyruvate, phosphate dikinase regulatory protein 2 of Listeria monocytogenes serotype 4b (strain F2365).